The sequence spans 362 residues: Mannose-1-phosphate guanyltransferase (362 aa).

The protein belongs to the transferase hexapeptide repeat family.

It is found in the cytoplasm. The enzyme catalyses alpha-D-mannose 1-phosphate + GTP + H(+) = GDP-alpha-D-mannose + diphosphate. It participates in nucleotide-sugar biosynthesis; GDP-alpha-D-mannose biosynthesis; GDP-alpha-D-mannose from alpha-D-mannose 1-phosphate (GTP route): step 1/1. Functionally, involved in cell wall synthesis where it is required for glycosylation. Involved in cell cycle progression through cell-size checkpoint. The polypeptide is Mannose-1-phosphate guanyltransferase (MPG1) (Candida albicans (strain SC5314 / ATCC MYA-2876) (Yeast)).